We begin with the raw amino-acid sequence, 195 residues long: Probable GTP-binding protein EngB (195 aa).

The EngB-type G domain occupies 24-195 (GLSEVALSGR…QIWDLIANYL (172 aa)). GTP is bound by residues 32–39 (GRSNVGKS), 59–63 (GKTQT), 77–80 (DVPG), 144–147 (TKED), and 176–178 (YSS). Mg(2+) is bound by residues S39 and T61.

The protein belongs to the TRAFAC class TrmE-Era-EngA-EngB-Septin-like GTPase superfamily. EngB GTPase family. The cofactor is Mg(2+).

Functionally, necessary for normal cell division and for the maintenance of normal septation. This chain is Probable GTP-binding protein EngB, found in Staphylococcus haemolyticus (strain JCSC1435).